Reading from the N-terminus, the 212-residue chain is Urease accessory protein UreG 2 (212 aa).

11-18 provides a ligand contact to GTP; the sequence is GPVGSGKM.

This sequence belongs to the SIMIBI class G3E GTPase family. UreG subfamily. Homodimer. UreD, UreF and UreG form a complex that acts as a GTP-hydrolysis-dependent molecular chaperone, activating the urease apoprotein by helping to assemble the nickel containing metallocenter of UreC. The UreE protein probably delivers the nickel.

It is found in the cytoplasm. Its function is as follows. Facilitates the functional incorporation of the urease nickel metallocenter. This process requires GTP hydrolysis, probably effectuated by UreG. In terms of biological role, disrupting the ure2 operon has no effect on urease activity, or pathogen survival in BALB/c mice when inoculated by gavage, but confers slightly enhanced resistance to low pH killing in vitro. The sequence is that of Urease accessory protein UreG 2 from Brucella suis biovar 1 (strain 1330).